The following is a 322-amino-acid chain: ATP-dependent 6-phosphofructokinase (322 aa).

G11 is a binding site for ATP. 21–25 (RAVVR) is an ADP binding site. Residues 72-73 (RC) and 102-105 (GDGS) contribute to the ATP site. Mg(2+) is bound at residue D103. 127-129 (TID) contacts substrate. Residue D129 is the Proton acceptor of the active site. Residue R156 participates in ADP binding. Substrate-binding positions include R164 and 171-173 (MGR). Residues 187-189 (GAE), R213, and 215-217 (KKH) each bind ADP. Residues E224, R245, and 251-254 (HVQR) contribute to the substrate site.

The protein belongs to the phosphofructokinase type A (PFKA) family. ATP-dependent PFK group I subfamily. Prokaryotic clade 'B1' sub-subfamily. In terms of assembly, homotetramer. Requires Mg(2+) as cofactor.

The protein localises to the cytoplasm. It catalyses the reaction beta-D-fructose 6-phosphate + ATP = beta-D-fructose 1,6-bisphosphate + ADP + H(+). The protein operates within carbohydrate degradation; glycolysis; D-glyceraldehyde 3-phosphate and glycerone phosphate from D-glucose: step 3/4. Its activity is regulated as follows. Allosterically activated by ADP and other diphosphonucleosides, and allosterically inhibited by phosphoenolpyruvate. Functionally, catalyzes the phosphorylation of D-fructose 6-phosphate to fructose 1,6-bisphosphate by ATP, the first committing step of glycolysis. The chain is ATP-dependent 6-phosphofructokinase from Staphylococcus aureus (strain MRSA252).